Consider the following 534-residue polypeptide: Serine/threonine-protein kinase ppk15 (534 aa).

The tract at residues 1 to 40 is disordered; the sequence is MDSDSPILPLSNNPPAARTHDHSQRNNHARHVSSSGTTLF. Phosphoserine is present on residues Ser-33, Ser-56, and Ser-60. A disordered region spans residues 85 to 104; it reads FSSEQNPRRPLTKPSEGVHN. The Protein kinase domain maps to 130-458; the sequence is YLILDTLGHG…PDQAKNHPFI (329 aa). ATP contacts are provided by residues 136 to 144 and Lys-159; that span reads LGHGTFGQV. Asp-257 serves as the catalytic Proton acceptor. Tyr-291 bears the Phosphotyrosine mark.

The protein belongs to the protein kinase superfamily. Ser/Thr protein kinase family.

It localises to the cytoplasm. The protein resides in the cytoskeleton. The protein localises to the microtubule organizing center. Its subcellular location is the spindle pole body. It catalyses the reaction L-seryl-[protein] + ATP = O-phospho-L-seryl-[protein] + ADP + H(+). It carries out the reaction L-threonyl-[protein] + ATP = O-phospho-L-threonyl-[protein] + ADP + H(+). The polypeptide is Serine/threonine-protein kinase ppk15 (ppk15) (Schizosaccharomyces pombe (strain 972 / ATCC 24843) (Fission yeast)).